Reading from the N-terminus, the 447-residue chain is Elongation factor 1-alpha (447 aa).

Residues 5 to 230 (KVHINIVVIG…DNINEPKRPS (226 aa)) enclose the tr-type G domain. Residues 14–21 (GHVDSGKS) form a G1 region. 14–21 (GHVDSGKS) is a binding site for GTP. Lysine 55 is modified (N6,N6-dimethyllysine). Residues 70-74 (GITID) form a G2 region. Position 79 is an N6,N6,N6-trimethyllysine (lysine 79). The G3 stretch occupies residues 91-94 (DAPG). GTP contacts are provided by residues 91–95 (DAPGH) and 153–156 (NKMD). The interval 153 to 156 (NKMD) is G4. Position 187 is an N6,N6,N6-trimethyllysine (lysine 187). Positions 194–196 (SGF) are G5. Lysine 261 is modified (N6-methyllysine). Glutamate 289 is subject to 5-glutamyl glycerylphosphorylethanolamine. Lysine 306 is modified (N6,N6,N6-trimethyllysine). Position 362 is a 5-glutamyl glycerylphosphorylethanolamine (glutamate 362). Position 396 is an N6,N6,N6-trimethyllysine (lysine 396).

Belongs to the TRAFAC class translation factor GTPase superfamily. Classic translation factor GTPase family. EF-Tu/EF-1A subfamily.

The protein resides in the cytoplasm. This protein promotes the GTP-dependent binding of aminoacyl-tRNA to the A-site of ribosomes during protein biosynthesis. The protein is Elongation factor 1-alpha of Pisum sativum (Garden pea).